The following is a 570-amino-acid chain: Sorting nexin-41 (570 aa).

2 disordered regions span residues 1–31 and 81–115; these read MSDFEDNNPFAGADRRDSVSSDATDDGPSAS and FDDGSNSFSATPTASITNQNDTAHEATNERTTTAS. A compositionally biased stretch (polar residues) spans 84–101; sequence GSNSFSATPTASITNQND. The region spanning 98–236 is the PX domain; the sequence is NQNDTAHEAT…RFLDPHASWS (139 aa). Residues Arg153, Ser155, Lys179, and Arg202 each contribute to the a 1,2-diacyl-sn-glycero-3-phospho-(1D-myo-inositol-3-phosphate) site. The tract at residues 429–498 is disordered; sequence DSQRINDALG…ASRRQGIGKT (70 aa). The segment covering 440-454 has biased composition (polar residues); that stretch reads TRSNNGPSTTNSGEQ. A compositionally biased stretch (low complexity) spans 455-464; it reads PSASPAPKKS.

It belongs to the sorting nexin family.

The protein localises to the endosome membrane. It localises to the endomembrane system. Its function is as follows. May be required for cytoplasm to vacuole transport (Cvt) and pexophagy. This is Sorting nexin-41 (SNX41) from Yarrowia lipolytica (strain CLIB 122 / E 150) (Yeast).